Consider the following 80-residue polypeptide: Putative membrane protein insertion efficiency factor (80 aa).

Belongs to the UPF0161 family.

The protein localises to the cell membrane. In terms of biological role, could be involved in insertion of integral membrane proteins into the membrane. The sequence is that of Putative membrane protein insertion efficiency factor from Corynebacterium jeikeium (strain K411).